We begin with the raw amino-acid sequence, 195 residues long: dTTP/UTP pyrophosphatase (195 aa).

Asp-77 (proton acceptor) is an active-site residue.

It belongs to the Maf family. YhdE subfamily. A divalent metal cation is required as a cofactor.

It localises to the cytoplasm. It carries out the reaction dTTP + H2O = dTMP + diphosphate + H(+). The catalysed reaction is UTP + H2O = UMP + diphosphate + H(+). Nucleoside triphosphate pyrophosphatase that hydrolyzes dTTP and UTP. May have a dual role in cell division arrest and in preventing the incorporation of modified nucleotides into cellular nucleic acids. This Flavobacterium psychrophilum (strain ATCC 49511 / DSM 21280 / CIP 103535 / JIP02/86) protein is dTTP/UTP pyrophosphatase.